Consider the following 686-residue polypeptide: Cadmium, zinc and cobalt-transporting ATPase (686 aa).

In terms of domain architecture, HMA spans 1–62; sequence MQEYHIHNLD…FIKQNEPHLS (62 aa). Topologically, residues 1 to 72 are cytoplasmic; sequence MQEYHIHNLD…LSFKEATEKP (72 aa). C11 and C14 together coordinate Cd(2+). Residues C11 and C14 each coordinate Co(2+). Positions 11 and 14 each coordinate Zn(2+). The helical transmembrane segment at 73 to 92 threads the bilayer; that stretch reads LSFTPLIITIMVFLGAILIL. Residues 93–102 are Extracellular-facing; that stretch reads HLNPSPLIEK. A helical transmembrane segment spans residues 103-124; that stretch reads AMFFVLALVYLVSGKDVILGAF. The Cytoplasmic portion of the chain corresponds to 125–131; sequence RGLRKGQ. Residues 132–151 traverse the membrane as a helical segment; it reads FFDENALMLIATIAAFFVGA. The Extracellular portion of the chain corresponds to 152 to 154; sequence YEE. A helical membrane pass occupies residues 155–174; sequence SVSIMVFYSAGEFLQKLAVS. At 175 to 308 the chain is on the cytoplasmic side; it reads RSKKSLKALV…ITKFSRYYTP (134 aa). The helical transmembrane segment at 309 to 327 threads the bilayer; it reads SVLFIALMIAVLPPLFSMG. Topologically, residues 328 to 332 are extracellular; it reads SFDEW. The helical transmembrane segment at 333–350 threads the bilayer; that stretch reads IYRGLVALMVSCPCALVI. Topologically, residues 351–635 are cytoplasmic; that stretch reads SVPLGYFGGV…VLAIAKKTKS (285 aa). The 4-aspartylphosphate intermediate role is filled by D388. D583 and D587 together coordinate Mg(2+). A helical transmembrane segment spans residues 636 to 657; the sequence is IIWQNILFALGIKAVFIVLGLM. The Extracellular portion of the chain corresponds to 658 to 665; it reads GVASLWEA. The chain crosses the membrane as a helical span at residues 666–681; that stretch reads VFGDVGVTLLALANSM. At 682–686 the chain is on the cytoplasmic side; that stretch reads RAMRA.

Belongs to the cation transport ATPase (P-type) (TC 3.A.3) family. Type IB subfamily.

It localises to the cell membrane. The catalysed reaction is Zn(2+)(in) + ATP + H2O = Zn(2+)(out) + ADP + phosphate + H(+). The enzyme catalyses Cd(2+)(in) + ATP + H2O = Cd(2+)(out) + ADP + phosphate + H(+). Its function is as follows. Couples the hydrolysis of ATP with the transport of cadmium, zinc and cobalt out of the cell. This ion efflux may influence the activity of urease, which is essential for the survival of the bacterium in the gastric environment. This Helicobacter pylori (strain ATCC 700392 / 26695) (Campylobacter pylori) protein is Cadmium, zinc and cobalt-transporting ATPase (cadA).